Consider the following 241-residue polypeptide: Ion-translocating oxidoreductase complex subunit E (241 aa).

6 consecutive transmembrane segments (helical) span residues 22–42 (LLGLCPVLAITVNAINAIGLG), 69–89 (IPIYIIIISSVVSSIDLVIKA), 91–111 (AFNLYQSLGIFIPLIITNCIV), 124–144 (VLVSILDGLSIGLGSTLTMFL), 157–177 (LFFGIEHVLGESFRFLYIEVL), and 182–202 (VFLLFAFPSGAFMILGIVLAG).

It belongs to the NqrDE/RnfAE family. In terms of assembly, the complex is composed of six subunits: RnfA, RnfB, RnfC, RnfD, RnfE and RnfG.

The protein localises to the cell inner membrane. Part of a membrane-bound complex that couples electron transfer with translocation of ions across the membrane. This Buchnera aphidicola subsp. Baizongia pistaciae (strain Bp) protein is Ion-translocating oxidoreductase complex subunit E.